Consider the following 494-residue polypeptide: Ribosomal lysine N-methyltransferase 4 (494 aa).

Residues 25 to 265 (PKIEIKDLCC…KNEQVYNIYG (241 aa)) enclose the SET domain. Tyrosine 264 contacts S-adenosyl-L-methionine.

Belongs to the class V-like SAM-binding methyltransferase superfamily. Histone-lysine methyltransferase family. SETD6 subfamily.

It is found in the nucleus. Functionally, S-adenosyl-L-methionine-dependent protein-lysine N-methyltransferase that monomethylates 60S ribosomal protein L42 (RPL42A and RPL42B) at 'Lys-55'. The polypeptide is Ribosomal lysine N-methyltransferase 4 (Saccharomyces cerevisiae (strain ATCC 204508 / S288c) (Baker's yeast)).